The chain runs to 601 residues: Glutathione-regulated potassium-efflux system protein KefB (601 aa).

13 helical membrane-spanning segments follow: residues A4 to A24, I29 to F49, E55 to L75, I87 to M107, F111 to A131, V152 to G172, H177 to G197, F207 to S227, L230 to L250, A262 to L282, L284 to I304, M324 to A344, and A356 to I376. The 120-residue stretch at K400–T519 folds into the RCK N-terminal domain.

It belongs to the monovalent cation:proton antiporter 2 (CPA2) transporter (TC 2.A.37) family. KefB subfamily. In terms of assembly, interacts with the regulatory subunit KefG.

Its subcellular location is the cell inner membrane. Pore-forming subunit of a potassium efflux system that confers protection against electrophiles. Catalyzes K(+)/H(+) antiport. The sequence is that of Glutathione-regulated potassium-efflux system protein KefB from Salmonella dublin (strain CT_02021853).